We begin with the raw amino-acid sequence, 826 residues long: Leucine--tRNA ligase (826 aa).

The short motif at 41–51 is the 'HIGH' region element; that stretch reads PYPSGKLHMGH. Positions 586 to 590 match the 'KMSKS' region motif; sequence KMSKS. Lys-589 contributes to the ATP binding site.

Belongs to the class-I aminoacyl-tRNA synthetase family.

The protein resides in the cytoplasm. It carries out the reaction tRNA(Leu) + L-leucine + ATP = L-leucyl-tRNA(Leu) + AMP + diphosphate. The sequence is that of Leucine--tRNA ligase from Natranaerobius thermophilus (strain ATCC BAA-1301 / DSM 18059 / JW/NM-WN-LF).